A 235-amino-acid chain; its full sequence is Golgi to ER traffic protein 1 (235 aa).

Met1 is a topological domain (lumenal). A helical membrane pass occupies residues His2–Thr21. Topologically, residues Asn22 to Arg104 are cytoplasmic. Residues Trp68–Arg104 adopt a coiled-coil conformation. A helical transmembrane segment spans residues Leu105–Tyr125. The Lumenal portion of the chain corresponds to Lys126–Ser181. Residues Val182–Val198 form a helical membrane-spanning segment. Topologically, residues Glu199–Asp235 are cytoplasmic.

The protein belongs to the WRB/GET1 family. In terms of assembly, component of the Golgi to ER traffic (GET) complex, which is composed of GET1, GET2 and GET3. Within the complex, GET1 and GET2 form a heterotetramer which is stabilized by phosphatidylinositol binding and which binds to the GET3 homodimer.

The protein resides in the endoplasmic reticulum membrane. The protein localises to the golgi apparatus membrane. Its function is as follows. Required for the post-translational delivery of tail-anchored (TA) proteins to the endoplasmic reticulum. Together with GET2, acts as a membrane receptor for soluble GET3, which recognizes and selectively binds the transmembrane domain of TA proteins in the cytosol. The GET complex cooperates with the HDEL receptor ERD2 to mediate the ATP-dependent retrieval of resident ER proteins that contain a C-terminal H-D-E-L retention signal from the Golgi to the ER. The sequence is that of Golgi to ER traffic protein 1 from Saccharomyces cerevisiae (strain RM11-1a) (Baker's yeast).